The primary structure comprises 468 residues: UDP-N-acetylmuramate--L-alanine ligase (468 aa).

An ATP-binding site is contributed by 116-122 (GTHGKTT).

Belongs to the MurCDEF family.

It is found in the cytoplasm. It catalyses the reaction UDP-N-acetyl-alpha-D-muramate + L-alanine + ATP = UDP-N-acetyl-alpha-D-muramoyl-L-alanine + ADP + phosphate + H(+). It participates in cell wall biogenesis; peptidoglycan biosynthesis. Cell wall formation. This Fusobacterium nucleatum subsp. nucleatum (strain ATCC 25586 / DSM 15643 / BCRC 10681 / CIP 101130 / JCM 8532 / KCTC 2640 / LMG 13131 / VPI 4355) protein is UDP-N-acetylmuramate--L-alanine ligase.